A 485-amino-acid polypeptide reads, in one-letter code: NADH-quinone oxidoreductase subunit N (485 aa).

The next 14 membrane-spanning stretches (helical) occupy residues leucine 8–isoleucine 28, phenylalanine 35–valine 55, phenylalanine 75–leucine 95, phenylalanine 105–leucine 125, serine 127–phenylalanine 147, tyrosine 159–alanine 179, leucine 203–phenylalanine 223, proline 235–methionine 255, threonine 271–glutamine 291, leucine 297–glutamine 317, valine 326–leucine 346, alanine 373–isoleucine 393, tryptophan 408–arginine 427, and alanine 449–isoleucine 469.

This sequence belongs to the complex I subunit 2 family. As to quaternary structure, NDH-1 is composed of 13 different subunits. Subunits NuoA, H, J, K, L, M, N constitute the membrane sector of the complex.

The protein resides in the cell inner membrane. The catalysed reaction is a quinone + NADH + 5 H(+)(in) = a quinol + NAD(+) + 4 H(+)(out). In terms of biological role, NDH-1 shuttles electrons from NADH, via FMN and iron-sulfur (Fe-S) centers, to quinones in the respiratory chain. The immediate electron acceptor for the enzyme in this species is believed to be ubiquinone. Couples the redox reaction to proton translocation (for every two electrons transferred, four hydrogen ions are translocated across the cytoplasmic membrane), and thus conserves the redox energy in a proton gradient. The protein is NADH-quinone oxidoreductase subunit N of Erwinia tasmaniensis (strain DSM 17950 / CFBP 7177 / CIP 109463 / NCPPB 4357 / Et1/99).